A 249-amino-acid chain; its full sequence is Short-chain dehydrogenase virB (249 aa).

The NADP(+) site is built by Ile-16, Arg-104, Tyr-150, Lys-154, Val-183, and Thr-185. The active-site Proton donor is Tyr-150. Lys-154 acts as the Lowers pKa of active site Tyr in catalysis.

The protein belongs to the short-chain dehydrogenases/reductases (SDR) family.

Its pathway is secondary metabolite biosynthesis. Functionally, short-chain dehydrogenase; part of the gene cluster that mediates the biosynthesis of virensols and trichoxide, fungal natural products that contain or are derived from a salicylaldehyde core. The pathway begins with the synthesis of the reduced chain in virensol C by the highly reducing polyketide synthase virA via condensation of one acetate and 8 malonate units. VirA has interesting programming rules since the first 2 ketides are fully reduced, the 3 following ketides undergo beta-dehydration, and the last 3 ketides are only reduced to beta-hydroxys to yield the trihydroxy portion. The production of aldehyde virensol C by virA alone is surprising, since virA does not contain a reductase (R) domain that is typically associated with reductive product release in HRPKS. The cupin-domain enzyme virC is involved in enhancing virA product turnover. The short-chain dehydrogenase virB then oxidizes the C-7 alcohol of virensol C to a ketone, yielding virensol D. Virensol D is further transformed to salicylaldehyde 5-deoxyaurocitrin by the short-chain dehydrogenase virD. VirD catalyzes the dehydrogenation of C-3 to form the beta-ketone aldehyde, which is followed by the generation of the nucleophilic C-2 that is required for the intramolecular aldol condensation between C-2 and C-7, itself followed by dehydration and aromatization which leads to salicylaldehyde 5-deoxyaurocitrin. While the dehydrogenation of virensol D is definitely catalyzed by virD, the aldol condensation and dehydration may be uncatalyzed or assisted by virD. The short chain dehydrogenase virG then converts salicylaldehyde 5-deoxyaurocitrin into virensol B which is further hydroxylated by the cytochrome P450 monooxygenase virE to yield the hydroquinone virensol A. VirI then may oxidize virensol A to form the quinone, while virH performs the epoxidation. Finally, the two remaining short-chain dehydrogenases, virK and virL, are probably responsible for reducing the ketones to the corresponding alcohols to furnish the epoxycyclohexanol structure in trichoxide. The protein is Short-chain dehydrogenase virB of Hypocrea virens (strain Gv29-8 / FGSC 10586) (Gliocladium virens).